The sequence spans 739 residues: Adhesion G protein-coupled receptor L4 (739 aa).

Residues Met1–Thr19 form the signal peptide. The region spanning Gln20 to Glu57 is the EGF-like 1 domain. Residues Gln20–Gln481 are Extracellular-facing. N-linked (GlcNAc...) asparagine glycosylation occurs at Asn21. Cystine bridges form between Cys22-Cys33, Cys27-Cys42, Cys44-Cys56, Cys62-Cys74, Cys68-Cys83, Cys85-Cys106, Cys112-Cys124, Cys118-Cys133, and Cys135-Cys156. Positions Asp58 to Gln107 constitute an EGF-like 2; calcium-binding domain. The region spanning Asp108–Gln157 is the EGF-like 3; calcium-binding domain. Asn176, Asn226, Asn237, Asn298, Asn422, Asn430, and Asn444 each carry an N-linked (GlcNAc...) asparagine glycan. The GAIN-B domain occupies Ser293 to Ile468. 2 cysteine pairs are disulfide-bonded: Cys418–Cys450 and Cys438–Cys452. The interval Cys418–Ile468 is GPS. A helical transmembrane segment spans residues Leu482–Ser502. Residues Glu503 to Lys513 are Cytoplasmic-facing. The chain crosses the membrane as a helical span at residues Asn514–Thr534. Topologically, residues Asn535 to Tyr548 are extracellular. A helical membrane pass occupies residues Phe549 to Val569. Residues Gly570–Asn581 lie on the Cytoplasmic side of the membrane. The chain crosses the membrane as a helical span at residues Phe582–Tyr602. Residues Arg603–Ser622 are Extracellular-facing. The helical transmembrane segment at Phe623–Tyr643 threads the bilayer. At Lys644–Arg667 the chain is on the cytoplasmic side. The helical transmembrane segment at Gly668–Val688 threads the bilayer. The Extracellular segment spans residues His689–Ala695. The chain crosses the membrane as a helical span at residues Tyr696–Leu716. Residues Ser717 to Arg739 lie on the Cytoplasmic side of the membrane.

Belongs to the G-protein coupled receptor 2 family. Adhesion G-protein coupled receptor (ADGR) subfamily. Heterodimer of 2 chains generated by proteolytic processing; the large extracellular N-terminal fragment and the membrane-bound C-terminal fragment predominantly remain associated and non-covalently linked. Glycosylated. In terms of processing, proteolytically cleaved into 2 subunits, an extracellular alpha subunit and a seven-transmembrane subunit.

The protein resides in the cell membrane. Functionally, endothelial orphan receptor that acts as a key regulator of angiogenesis. The sequence is that of Adhesion G protein-coupled receptor L4 (Adgrl4) from Mus musculus (Mouse).